A 521-amino-acid polypeptide reads, in one-letter code: MTRILSEEVSPIWILTAIVVVAYTTVRYLRSPWRNLPPGPRGLPLIGNLLELRGKQWLTFTELGKKYGDLMYFNVAGQPLVVLNSQKVAADLLDRRAGKYSDRPRNIVASDIMTGGNLVVFTRYGDVWRRMRKAAHEGLNKGVVYKYHPIQTAEAVLLTAGVLAEPEKWNSHIRRTAASAIMSMVYDTPPTSEQDPSVKNINDFVARLTRAAMPGAHFVEFFPWMRYIPSKYAKWKREAEESYTKDSAMFEGLFNGVKDRVAKGDERPSLASTLIQDAGRHDLTDRENSWLAGTMYAAGAETTSGVMSWWTLAMIVYPETQKRAQAELDAVVGRDRLPSFADYEHLPYIRAMVKEALRWRMVDPVGLPHTSTEDDVYDGYFIPAGTILIANVWHLNRDPEIYGPDAEHFNPARHLDKDGKLAPGPADTKEESHVTYGFGRRICVGRHVANNSLFIDIAMMLWAMNIERATDENGVPLPLDVDGCIEDGLVTRPVPFKAKITPRFQEAQAIVEQERELLGYH.

Residues 9–26 traverse the membrane as a helical segment; it reads VSPIWILTAIVVVAYTTV. Cys443 is a heme binding site. Asn450 carries N-linked (GlcNAc...) asparagine glycosylation.

This sequence belongs to the cytochrome P450 family. Requires heme as cofactor.

It localises to the membrane. It functions in the pathway secondary metabolite biosynthesis. Cytochrome P450 monooxygenase, part of the gene cluster that mediates the biosynthesis of melleolides, a range of antifungal and phytotoxic polyketide derivatives composed of an orsellinic acid (OA) moiety esterified to various sesquiterpene alcohols. The first step in melleolides biosynthesis is performed by the delta(6)-protoilludene synthase PRO1 which catalyzes the cyclization of farnesyl diphosphate to protoilludene. The orsellinic acid synthase armB produces OA by condensing acetyl-CoA with 3 malonyl-CoA units in a three-round chain elongation reaction folowed by a C2-C7 ring closure. ArmB further catalyzes the trans-esterification of OA to the various sesquiterpene alcohols resulting from the hydroxylation of protoilludene. The melleolides cluster also includes 5 cytochrome P450 monooxygenases, 4 NAD(+)-dependent oxidoreductases, one flavin-dependent oxidoreductase, and one O-methyltransferase. The cytochrome P450 monooxygenases may be involved in protoilludene hydroxylation to elaborate melleolides with multiple alcohol groups, such as melleolide D, which carries alcohol functionalities at C-4, C-5, C-10, and C-13. The role of the NAD(+)-dependent enzymes remains unknown. Numerous melleolides, including arnamial, show 5'-O-methylation of the aromatic moiety which may be catalyzed by the methyltransferase encoded in the cluster. The flavin-dependent oxidoreductase might represent the dehydrogenase yielding the aldehyde in position 1 of arnamial and other melleolides. Finally, several halogenase localized outside of the cluster, are able to catalyze the transfer of a single chlorine atom to the melleolide backbone, resulting in a 6'-chloromelleolide product. This chain is Cytochrome P450 monooxygenase ARMGADRAFT_1018420, found in Armillaria gallica (Bulbous honey fungus).